The following is a 117-amino-acid chain: Photosystem II reaction center Psb28 protein (117 aa).

Belongs to the Psb28 family. In terms of assembly, part of the photosystem II complex.

The protein resides in the cellular thylakoid membrane. In Prochlorococcus marinus (strain MIT 9215), this protein is Photosystem II reaction center Psb28 protein.